The chain runs to 445 residues: MAKDLQVTTSKVNDNQTQLTVKVPVEQIQNKVEGRIRNVAKTAKIDGFRKGKVPVSHIRAQYGAGIQQEVINDVIRDTVFEAIKAEDVRAVGMPNIDDVKLEDEFLVYQATVEIFPEIKVEGMSDIEVERHTATITDEDVDTMIENLRKQRQEFAEKEGAADEGDQVTFDFEGSIDGEKFEGGSAEDFKLVLGSGQMIPGFEDGIKGLAAGEEKTIDVTFPEDYQAENLAGKEAQFKINVKKVEEAKLPEINDEFLELFGVKEGGVEQLKTDVRKNMTREIKNAARNQVKQAAFDALLEKNEFDVPSAMVDQEVDRQRNLMMQRFAQQFGGNANSIDKDMLPRELFEEQAIRAARLGVLVSRVIEENDLKVDQERVETFIKETAENYEDPQEVIEYYTNDAQQRANIESVVLEDQVVDFLLEQGKVTDKEVGYQELLASQQQGMM.

A PPIase FKBP-type domain is found at 164 to 249; it reads GDQVTFDFEG…VKKVEEAKLP (86 aa).

This sequence belongs to the FKBP-type PPIase family. Tig subfamily.

The protein localises to the cytoplasm. The enzyme catalyses [protein]-peptidylproline (omega=180) = [protein]-peptidylproline (omega=0). Its function is as follows. Involved in protein export. Acts as a chaperone by maintaining the newly synthesized protein in an open conformation. Functions as a peptidyl-prolyl cis-trans isomerase. The protein is Trigger factor of Psychrobacter sp. (strain PRwf-1).